The primary structure comprises 598 residues: Probable translation initiation factor IF-2 (598 aa).

The tr-type G domain occupies 8 to 226 (IRQPIISVLG…VTGLAQRFLE (219 aa)). A G1 region spans residues 17-24 (GHVDHGKT). 17–24 (GHVDHGKT) provides a ligand contact to GTP. The interval 42–46 (GITQH) is G2. A G3 region spans residues 81–84 (DTPG). GTP is bound by residues 81–85 (DTPGH) and 135–138 (NKVD). The segment at 135–138 (NKVD) is G4. Residues 203–205 (SGV) form a G5 region.

This sequence belongs to the TRAFAC class translation factor GTPase superfamily. Classic translation factor GTPase family. IF-2 subfamily.

Its function is as follows. Function in general translation initiation by promoting the binding of the formylmethionine-tRNA to ribosomes. Seems to function along with eIF-2. This chain is Probable translation initiation factor IF-2, found in Methanopyrus kandleri (strain AV19 / DSM 6324 / JCM 9639 / NBRC 100938).